We begin with the raw amino-acid sequence, 684 residues long: uncharacterized protein (684 aa).

Positions 54-239 (LKYLYNKKDV…LLFNRDFEVV (186 aa)) constitute a Helicase ATP-binding domain. 67–74 (TSTASGKS) provides a ligand contact to ATP. The DEVH box motif lies at 181 to 184 (DELH). The region spanning 264 to 419 (LLRRLIENLV…YMPVNIKNRF (156 aa)) is the Helicase C-terminal domain.

The protein belongs to the helicase family.

This is an uncharacterized protein from Methanocaldococcus jannaschii (strain ATCC 43067 / DSM 2661 / JAL-1 / JCM 10045 / NBRC 100440) (Methanococcus jannaschii).